A 229-amino-acid chain; its full sequence is Small ribosomal subunit protein uS3 (229 aa).

Positions 39-107 (VRQYLTEKLK…TAQINIAEIR (69 aa)) constitute a KH type-2 domain.

The protein belongs to the universal ribosomal protein uS3 family. Part of the 30S ribosomal subunit. Forms a tight complex with proteins S10 and S14.

Binds the lower part of the 30S subunit head. Binds mRNA in the 70S ribosome, positioning it for translation. The protein is Small ribosomal subunit protein uS3 of Shewanella denitrificans (strain OS217 / ATCC BAA-1090 / DSM 15013).